Consider the following 215-residue polypeptide: Orotate phosphoribosyltransferase (215 aa).

Lys-26 is a binding site for 5-phospho-alpha-D-ribose 1-diphosphate. Residue 34–35 participates in orotate binding; that stretch reads FF. 5-phospho-alpha-D-ribose 1-diphosphate contacts are provided by residues 72–73, Arg-99, Lys-100, Lys-103, His-105, and 125–133; these read YK and DDVISSGIS. Residues Ser-129 and Arg-157 each contribute to the orotate site.

The protein belongs to the purine/pyrimidine phosphoribosyltransferase family. PyrE subfamily. Homodimer. Mg(2+) is required as a cofactor.

It carries out the reaction orotidine 5'-phosphate + diphosphate = orotate + 5-phospho-alpha-D-ribose 1-diphosphate. It functions in the pathway pyrimidine metabolism; UMP biosynthesis via de novo pathway; UMP from orotate: step 1/2. Functionally, catalyzes the transfer of a ribosyl phosphate group from 5-phosphoribose 1-diphosphate to orotate, leading to the formation of orotidine monophosphate (OMP). The protein is Orotate phosphoribosyltransferase of Halorhodospira halophila (strain DSM 244 / SL1) (Ectothiorhodospira halophila (strain DSM 244 / SL1)).